A 460-amino-acid polypeptide reads, in one-letter code: Glycine--tRNA ligase (460 aa).

Substrate-binding residues include arginine 99 and glutamate 162. Residues arginine 194–glutamate 196, phenylalanine 204–phenylalanine 209, glutamate 281–leucine 282, and glycine 325–arginine 328 contribute to the ATP site. Phenylalanine 209 to glutamate 213 is a binding site for substrate. Glutamate 321–glycine 325 serves as a coordination point for substrate.

This sequence belongs to the class-II aminoacyl-tRNA synthetase family. Homodimer.

It is found in the cytoplasm. The enzyme catalyses tRNA(Gly) + glycine + ATP = glycyl-tRNA(Gly) + AMP + diphosphate. In terms of biological role, catalyzes the attachment of glycine to tRNA(Gly). The polypeptide is Glycine--tRNA ligase (Streptomyces coelicolor (strain ATCC BAA-471 / A3(2) / M145)).